Here is a 317-residue protein sequence, read N- to C-terminus: uncharacterized protein (317 aa).

The helical transmembrane segment at alanine 11–leucine 31 threads the bilayer. PASTA domains lie at asparagine 33–lysine 100, glycine 101–lysine 174, and aspartate 180–lysine 241.

It is found in the membrane. This is an uncharacterized protein from Borreliella burgdorferi (strain ATCC 35210 / DSM 4680 / CIP 102532 / B31) (Borrelia burgdorferi).